A 552-amino-acid chain; its full sequence is Urocanate hydratase (552 aa).

NAD(+) is bound by residues 49–50, Q127, 173–175, D193, 239–240, 260–264, 270–271, and Y319; these read GG, GMG, NA, QTSAH, and YI. C407 is a catalytic residue. G489 lines the NAD(+) pocket.

This sequence belongs to the urocanase family. It depends on NAD(+) as a cofactor.

The protein localises to the cytoplasm. It carries out the reaction 4-imidazolone-5-propanoate = trans-urocanate + H2O. It participates in amino-acid degradation; L-histidine degradation into L-glutamate; N-formimidoyl-L-glutamate from L-histidine: step 2/3. Its function is as follows. Catalyzes the conversion of urocanate to 4-imidazolone-5-propionate. This chain is Urocanate hydratase, found in Bacillus cereus (strain B4264).